Reading from the N-terminus, the 101-residue chain is Small ribosomal subunit protein uS14A (101 aa).

A disordered region spans residues 47–66 (ALASLPRDSNPNRVTNRCAL).

This sequence belongs to the universal ribosomal protein uS14 family. In terms of assembly, part of the 30S ribosomal subunit. Contacts proteins S3 and S10.

Binds 16S rRNA, required for the assembly of 30S particles and may also be responsible for determining the conformation of the 16S rRNA at the A site. This chain is Small ribosomal subunit protein uS14A, found in Myxococcus xanthus (strain DK1622).